The chain runs to 280 residues: MELWLDEALELKNGRALKIKVKEFLHSRTTPFQKIDVFESVGFGRMFTLDGVVMMTEADEFAYHEMIVHVPMMSHPNPEKVLVIGGGDGGTVREVLKHPSVKEVHLCEIDKGVIDVCYEYFPEIANAMKDPRVKHAYEDGAKYVKDYQNYFDCIMVDSSDPVGPAEVLFKRPFYETMANCLKEGGICTTQGESFYYHGSIIRELFNFIPEIFKHCGYYYTVVPTYPSGIIGFTYCSKGPDPYTVVPDPQRVPQGLKYYSAEMHKAAFVLPQFAQKHIVRK.

Positions 2–237 constitute a PABS domain; that stretch reads ELWLDEALEL…GIIGFTYCSK (236 aa). Glutamine 33 is a binding site for S-methyl-5'-thioadenosine. Residues histidine 64 and aspartate 88 each contribute to the spermidine site. S-methyl-5'-thioadenosine-binding positions include glutamate 108 and 139 to 140; that span reads DG. Aspartate 157 acts as the Proton acceptor in catalysis. Spermidine is bound at residue 157-160; the sequence is DSSD. Position 164 (proline 164) interacts with S-methyl-5'-thioadenosine.

Belongs to the spermidine/spermine synthase family. Homodimer or homotetramer.

The protein resides in the cytoplasm. It carries out the reaction S-adenosyl 3-(methylsulfanyl)propylamine + putrescine = S-methyl-5'-thioadenosine + spermidine + H(+). It functions in the pathway amine and polyamine biosynthesis; spermidine biosynthesis; spermidine from putrescine: step 1/1. Its function is as follows. Catalyzes the irreversible transfer of a propylamine group from the amino donor S-adenosylmethioninamine (decarboxy-AdoMet) to putrescine (1,4-diaminobutane) to yield spermidine. The protein is Polyamine aminopropyltransferase 2 of Leptospira interrogans serogroup Icterohaemorrhagiae serovar Lai (strain 56601).